A 1803-amino-acid chain; its full sequence is Pyruvate dehydrogenase [NADP(+)], mitochondrial (1803 aa).

The transit peptide at 1–37 directs the protein to the mitochondrion; the sequence is MKQSVRPIISNVLRKEVALYSTIIGQDKGKEPTGRTY. 2 4Fe-4S ferredoxin-type domains span residues 747-776 and 802-831; these read FIPQWIPANCTQCNYCSYVCPHATIRPFVL and FRIQVAPEDCTGCQVCVETCPDDALEMTDA. Positions 756, 759, 762, 766, 811, 814, 817, and 821 each coordinate [4Fe-4S] cluster. A Flavodoxin-like domain is found at 1248–1391; it reads VTILYGSETG…GFNNWIPSVW (144 aa). One can recognise an FAD-binding FR-type domain in the interval 1425-1650; sequence KSTPVLSITG…IHPTAMEFPD (226 aa). Residues 1458–1469 and 1585–1595 contribute to the FAD site; these read YQVGDSLGVFPE and IKPRYYSISSA.

In the N-terminal section; belongs to the pyruvate:ferredoxin/flavodoxin oxidoreductase family. As to quaternary structure, homodimer. FAD serves as cofactor. FMN is required as a cofactor. It depends on thiamine diphosphate as a cofactor. The cofactor is iron-sulfur cluster.

The protein localises to the mitochondrion. It catalyses the reaction pyruvate + NADP(+) + CoA = acetyl-CoA + CO2 + NADPH. Functionally, pyruvate dehydrogenase [NADP(+)] is one of three enzymes participating in respiratory metabolism. The enzyme is also active with 2-oxobutyrate and oxaloacetate. The enzyme is oxygen sensitive. This is Pyruvate dehydrogenase [NADP(+)], mitochondrial (PNO) from Euglena gracilis.